The sequence spans 32 residues: Peptide II.10.10 (32 aa).

3 disulfide bridges follow: Cys5–Cys24, Cys10–Cys29, and Cys14–Cys31.

Belongs to the short scorpion toxin superfamily. Potassium channel inhibitor family. Alpha-KTx 10 subfamily. In terms of tissue distribution, expressed by the venom gland.

The protein localises to the secreted. The sequence is that of Peptide II.10.10 from Centruroides tecomanus (Scorpion).